Here is a 277-residue protein sequence, read N- to C-terminus: Cis-2,3-dihydrobiphenyl-2,3-diol dehydrogenase (277 aa).

9 to 33 contacts NAD(+); the sequence is LITGGASGLGRALVDRFVAERAKVA. Residue S142 coordinates substrate. Y155 acts as the Proton acceptor in catalysis.

The protein belongs to the short-chain dehydrogenases/reductases (SDR) family. As to quaternary structure, homotetramer.

The enzyme catalyses (2R,3S)-3-phenylcyclohexa-3,5-diene-1,2-diol + NAD(+) = biphenyl-2,3-diol + NADH + H(+). It participates in xenobiotic degradation; biphenyl degradation; 2-hydroxy-2,4-pentadienoate and benzoate from biphenyl: step 2/4. This chain is Cis-2,3-dihydrobiphenyl-2,3-diol dehydrogenase (bphB), found in Pseudomonas putida (Arthrobacter siderocapsulatus).